The chain runs to 253 residues: CD151 antigen (253 aa).

Residues 1–18 (MGEFNEKKATCGTVCLKY) are Cytoplasmic-facing. 2 S-palmitoyl cysteine lipidation sites follow: C11 and C15. The chain crosses the membrane as a helical span at residues 19–39 (LLFTYNCCFWLAGLAVMAVGI). The Extracellular segment spans residues 40–57 (WTLALKSDYISLLASSTY). The chain crosses the membrane as a helical span at residues 58–78 (LATAYILVVAGVVVMVTGVLG). The Cytoplasmic segment spans residues 79-91 (CCATFKERRNLLR). A helical membrane pass occupies residues 92–112 (LYFILLLIIFLLEIIAGILAY). Residues 113 to 221 (VYYQQLNTEL…LETFIQEHLR (109 aa)) lie on the Extracellular side of the membrane. An N-linked (GlcNAc...) asparagine glycan is attached at N159. Residues 222–242 (VIGAVGIGIACVQVFGMIFTC) form a helical membrane-spanning segment. S-palmitoyl cysteine attachment occurs at residues C242 and C243. Residues 243–253 (CLYRSLKLEHY) lie on the Cytoplasmic side of the membrane.

It belongs to the tetraspanin (TM4SF) family. As to quaternary structure, interacts with integrins ITGA3:ITGB1, ITGA5:ITGB1, ITGA3:ITGB1 and ITGA6:ITGB4 and with CD9 and CD181. Interacts (via the second extracellular domain) with integrin ITGAV:ITGB3. Interacts with ITGA3; this interaction modulates ITGA3 glycosylation pattern. Interacts with F11R. Interacts with RAC1 and CDC42; these interactions mediate physical association of RAC1 and CDC42 with integrin adhesion receptor complexes. Palmitoylated. Palmitoylation by ZDHHC2 regulates CD151 expression, association with other tetraspanin family proteins and function in cell adhesion. In terms of processing, ubiquitinated by RNF128 on lysine residues present in the tetraspanin amino terminus via 'Lys-48'-linked ubiquitin leading to proteasomal degradation.

The protein resides in the cell membrane. In terms of biological role, structural component of specialized membrane microdomains known as tetraspanin-enriched microdomains (TERMs), which act as platforms for receptor clustering and signaling. Plays a role in various cellular and molecular mechanism through its association with both integrin and non-integrin proteins. These interactions facilitate critical cellular functions, including cell-to-cell communication, wound healing, platelet aggregation, trafficking, cell motility, and angiogenesis. Via interaction with JAM-A/F11R and integrin ITGA3:ITGB1, promotes the recruitment of signaling molecules such as RAC1, CDC42 and RhoGTPases to facilitate the polarization of epithelial cells and the reorganization of the actin cytoskeleton, which are critical steps in cell migration process. Regulates the glycosylation pattern of ITGA3:ITGB1 thereby modulating its activity. Plays an essential role in the maintenance of central laminin-binding integrin ITGA6:ITGB4-containing adhesion complexes. Essential for the proper assembly of the glomerular and tubular basement membranes in kidney. Contributes to T-cell activation by modulating integrin signaling leading to activation of downstream targets PTK2 and MAPK1/MAPK3. The sequence is that of CD151 antigen (Cd151) from Mus musculus (Mouse).